Consider the following 423-residue polypeptide: G protein-activated inward rectifier potassium channel 2 (423 aa).

Topologically, residues 1-89 (MAKLTESMTN…IFTTLVDLKW (89 aa)) are cytoplasmic. Phosphoserine is present on residues S16 and S23. Residues 90–114 (RFNLLIFVMVYTVTWLFFGMIWWLI) traverse the membrane as a helical segment. The Extracellular segment spans residues 115–138 (AYIRGDMDHIEDPSWTPCVTNLNG). Residues 139-150 (FVSAFLFSIETE) constitute an intramembrane region (helical; Pore-forming). The pore-forming intramembrane region spans 151–157 (TTIGYGY). Positions 152–157 (TIGYGY) match the Selectivity filter motif. Residues 158-166 (RVITDKCPE) lie on the Extracellular side of the membrane. A helical transmembrane segment spans residues 167 to 188 (GIILLLIQSVLGSIVNAFMVGC). Over 189–423 (MFVKISQPKK…VANLENESKV (235 aa)) the chain is Cytoplasmic. Residues 390 to 423 (NQHAELETEEEEKNLEEQTERNGDVANLENESKV) are disordered. Positions 420–423 (ESKV) match the PDZ-binding motif.

It belongs to the inward rectifier-type potassium channel (TC 1.A.2.1) family. KCNJ6 subfamily. As to quaternary structure, associates with KCNJ3/GIRK1 or KCNJ5/GRIK4 to form a G-protein-activated heteromultimer pore-forming unit. The resulting inward current is much larger. Interacts (via PDZ-binding motif) with SNX27 (via PDZ domain); the interaction is required when endocytosed to prevent degradation in lysosomes and promote recycling to the plasma membrane.

Its subcellular location is the membrane. It carries out the reaction K(+)(in) = K(+)(out). Activated by phosphatidylinositol 4,5 biphosphate (PtdIns(4,5)P2). Inward rectifier potassium channels are characterized by a greater tendency to allow potassium to flow into the cell rather than out of it. Their voltage dependence is regulated by the concentration of extracellular potassium; as external potassium is raised, the voltage range of the channel opening shifts to more positive voltages. The inward rectification is mainly due to the blockage of outward current by internal magnesium. This potassium channel may be involved in the regulation of insulin secretion by glucose and/or neurotransmitters acting through G-protein-coupled receptors. The polypeptide is G protein-activated inward rectifier potassium channel 2 (KCNJ6) (Pongo abelii (Sumatran orangutan)).